Here is a 466-residue protein sequence, read N- to C-terminus: 3-isopropylmalate dehydratase large subunit (466 aa).

Positions 347, 407, and 410 each coordinate [4Fe-4S] cluster.

The protein belongs to the aconitase/IPM isomerase family. LeuC type 1 subfamily. In terms of assembly, heterodimer of LeuC and LeuD. [4Fe-4S] cluster is required as a cofactor.

It catalyses the reaction (2R,3S)-3-isopropylmalate = (2S)-2-isopropylmalate. It functions in the pathway amino-acid biosynthesis; L-leucine biosynthesis; L-leucine from 3-methyl-2-oxobutanoate: step 2/4. Its function is as follows. Catalyzes the isomerization between 2-isopropylmalate and 3-isopropylmalate, via the formation of 2-isopropylmaleate. This Shewanella sediminis (strain HAW-EB3) protein is 3-isopropylmalate dehydratase large subunit.